The following is a 309-amino-acid chain: HTH-type transcriptional activator AaeR (309 aa).

The HTH lysR-type domain maps to 1–59 (MERLKRMSVFAKVVEFGSFTAAARQLQMSVSSISQTVSKLEDELQVKLLNRSTRSIGLT). Positions 19 to 38 (FTAAARQLQMSVSSISQTVS) form a DNA-binding region, H-T-H motif.

It belongs to the LysR transcriptional regulatory family.

Its activity is regulated as follows. Activity is regulated by p-hydroxybenzoic acid. Transcriptional regulator that activates expression of the aaeXAB operon, which is involved in the efflux of aromatic carboxylic acids such as p-hydroxybenzoic acid (pHBA). In the presence of the effector pHBA, acts by binding to a single target within the aaeXAB-aaeR intergenic region. In the absence of pHBA, binds more than 50 sites along the E.coli K12 genome, including genes related to biofilm formation and several genes involved in stress response, suggesting that it might play a role in quorum sensing in the absence of pHBA. The chain is HTH-type transcriptional activator AaeR from Escherichia coli (strain K12).